The primary structure comprises 141 residues: Large ribosomal subunit protein uL13 (141 aa).

This sequence belongs to the universal ribosomal protein uL13 family. Part of the 50S ribosomal subunit.

Its function is as follows. This protein is one of the early assembly proteins of the 50S ribosomal subunit, although it is not seen to bind rRNA by itself. It is important during the early stages of 50S assembly. This is Large ribosomal subunit protein uL13 from Deinococcus deserti (strain DSM 17065 / CIP 109153 / LMG 22923 / VCD115).